The primary structure comprises 60 residues: MKVRVDADACIGCGVCENLCPDVFQLGDDGKAKVLQPETDLPCAKDAADSCPTGAISVEE.

4Fe-4S ferredoxin-type domains lie at 2–29 (KVRV…LGDD) and 30–60 (GKAK…SVEE). [4Fe-4S] cluster-binding residues include C10, C13, and C16. Cysteines 20 and 43 form a disulfide. [4Fe-4S] cluster is bound at residue C51.

Monomer. It depends on [4Fe-4S] cluster as a cofactor.

Functionally, ferredoxins are iron-sulfur proteins that transfer electrons in a wide variety of metabolic reactions. In Thermotoga maritima (strain ATCC 43589 / DSM 3109 / JCM 10099 / NBRC 100826 / MSB8), this protein is Ferredoxin (fdx).